The primary structure comprises 212 residues: MTDLSDIRREYTKGGLRRSELPEDPMALFERWMEQAKAAELTDPTAMCVATVDELGQPYQRIVLLKRFDEQGFVFFTNLGSRKATQLKHNAHISLLFPWHPLERQVAVTGIAEPLSTAEVLKYFVTRPKDSQIAAWVSAQSSKLSARQVLEAKFMEMKQKFSAGEVPLPSFWGGYLVRPASIEFWQGGEHRLHDRFIYEKTAAGWDIERLAP.

Residues 8-11 (RREY) and Lys-66 contribute to the substrate site. Residues 61–66 (RIVLLK), 76–77 (FT), Arg-82, Lys-83, and Gln-105 each bind FMN. Substrate contacts are provided by Tyr-123, Arg-127, and Ser-131. Residues 140–141 (QS) and Trp-185 contribute to the FMN site. 191–193 (RLH) provides a ligand contact to substrate. Arg-195 is an FMN binding site.

It belongs to the pyridoxamine 5'-phosphate oxidase family. Homodimer. The cofactor is FMN.

The enzyme catalyses pyridoxamine 5'-phosphate + O2 + H2O = pyridoxal 5'-phosphate + H2O2 + NH4(+). It catalyses the reaction pyridoxine 5'-phosphate + O2 = pyridoxal 5'-phosphate + H2O2. The protein operates within cofactor metabolism; pyridoxal 5'-phosphate salvage; pyridoxal 5'-phosphate from pyridoxamine 5'-phosphate: step 1/1. It participates in cofactor metabolism; pyridoxal 5'-phosphate salvage; pyridoxal 5'-phosphate from pyridoxine 5'-phosphate: step 1/1. In terms of biological role, catalyzes the oxidation of either pyridoxine 5'-phosphate (PNP) or pyridoxamine 5'-phosphate (PMP) into pyridoxal 5'-phosphate (PLP). The polypeptide is Pyridoxine/pyridoxamine 5'-phosphate oxidase (Shewanella amazonensis (strain ATCC BAA-1098 / SB2B)).